A 282-amino-acid polypeptide reads, in one-letter code: Aldo-keto reductase BQ2027_MB2996 (282 aa).

Y57 functions as the Proton donor in the catalytic mechanism. Residues L197, V235, R237, S238, A239, R243, S246, N247, and R273 each contribute to the NADPH site.

The protein belongs to the aldo/keto reductase family.

In Mycobacterium bovis (strain ATCC BAA-935 / AF2122/97), this protein is Aldo-keto reductase BQ2027_MB2996.